The chain runs to 196 residues: FAD-linked sulfhydryl oxidase ERV2 (196 aa).

Topologically, residues 1–12 are cytoplasmic; the sequence is MKQIVKRSHAIR. Residues 13-35 form a helical; Signal-anchor membrane-spanning segment; sequence IVAALGIIGLWMFFSSNELSIAT. At 36-196 the chain is on the lumenal side; the sequence is PGLIKAKSGI…SLEKEAKQHG (161 aa). In terms of domain architecture, ERV/ALR sulfhydryl oxidase spans 72-174; that stretch reads MGDDKVKKEV…YDCATILEDY (103 aa). 3 residues coordinate FAD: lysine 78, arginine 83, and tryptophan 86. Cysteine 121 and cysteine 124 are oxidised to a cystine. FAD-binding residues include histidine 127, cysteine 150, histidine 153, asparagine 157, lysine 162, and tyrosine 174. Cysteine 150 and cysteine 167 are joined by a disulfide. Residues cysteine 176 and cysteine 178 are joined by a disulfide bond.

In terms of assembly, homodimer. Interacts with the substrate protein PDI1, forming transient intermolecular disulfide bridges. FAD is required as a cofactor.

It localises to the endoplasmic reticulum membrane. It catalyses the reaction 2 R'C(R)SH + O2 = R'C(R)S-S(R)CR' + H2O2. Its function is as follows. FAD-dependent sulfhydryl oxidase that catalyzes disulfide bond formation in the endoplasmic reticulum lumen in parallel to ERO1. This Saccharomyces cerevisiae (strain ATCC 204508 / S288c) (Baker's yeast) protein is FAD-linked sulfhydryl oxidase ERV2 (ERV2).